Here is a 136-residue protein sequence, read N- to C-terminus: Large-conductance mechanosensitive channel (136 aa).

4 helical membrane-spanning segments follow: residues 9 to 29, 32 to 52, 54 to 74, and 79 to 99; these read AFAS…GAAF, IVSS…LGGV, FSDL…VVIA, and IQTV…LKAI.

This sequence belongs to the MscL family. As to quaternary structure, homopentamer.

It is found in the cell inner membrane. In terms of biological role, channel that opens in response to stretch forces in the membrane lipid bilayer. May participate in the regulation of osmotic pressure changes within the cell. This Shewanella oneidensis (strain ATCC 700550 / JCM 31522 / CIP 106686 / LMG 19005 / NCIMB 14063 / MR-1) protein is Large-conductance mechanosensitive channel.